The chain runs to 205 residues: Putative 3-methyladenine DNA glycosylase (205 aa).

This sequence belongs to the DNA glycosylase MPG family.

In Bacillus cereus (strain B4264), this protein is Putative 3-methyladenine DNA glycosylase.